A 321-amino-acid chain; its full sequence is Ornithine carbamoyltransferase (321 aa).

Carbamoyl phosphate-binding positions include 53–56 (STRT), glutamine 80, arginine 104, and 131–134 (HPCQ). Residues asparagine 166, aspartate 230, and 234-235 (SM) each bind L-ornithine. Carbamoyl phosphate contacts are provided by residues 270–271 (CL) and arginine 298.

This sequence belongs to the aspartate/ornithine carbamoyltransferase superfamily. OTCase family.

The protein localises to the cytoplasm. It carries out the reaction carbamoyl phosphate + L-ornithine = L-citrulline + phosphate + H(+). It functions in the pathway amino-acid biosynthesis; L-arginine biosynthesis; L-arginine from L-ornithine and carbamoyl phosphate: step 1/3. Reversibly catalyzes the transfer of the carbamoyl group from carbamoyl phosphate (CP) to the N(epsilon) atom of ornithine (ORN) to produce L-citrulline. This chain is Ornithine carbamoyltransferase, found in Bifidobacterium longum (strain NCC 2705).